Reading from the N-terminus, the 862-residue chain is Active breakpoint cluster region-related protein (862 aa).

Positions 29 to 84 are disordered; the sequence is YDAEGNEEHKNSREGSETMPYIDESPTMSPQLSARSQDSVDGVSPTPTEVLLPGGE. Residues 34 to 44 show a composition bias toward basic and acidic residues; that stretch reads NEEHKNSREGS. Residues 54–67 show a composition bias toward polar residues; it reads PTMSPQLSARSQDS. The DH domain maps to 93–286; the sequence is MRKLVLSGVL…QNFLSSINED (194 aa). The PH domain occupies 303 to 462; sequence QLVKDGFLVE…WREAIQKLQK (160 aa). The region spanning 488–616 is the C2 domain; sequence VHNVPIISHK…QSKNWHDDVI (129 aa). The 199-residue stretch at 650–848 folds into the Rho-GAP domain; it reads VKISVVTKRE…YYLQHPPISF (199 aa).

It is found in the cell projection. The protein resides in the dendritic spine. The protein localises to the axon. It localises to the synapse. Functionally, protein with a unique structure having two opposing regulatory activities toward small GTP-binding proteins. The C-terminus is a GTPase-activating protein domain which stimulates GTP hydrolysis by RAC1, RAC2 and CDC42. Accelerates the intrinsic rate of GTP hydrolysis of RAC1 or CDC42, leading to down-regulation of the active GTP-bound form. The central Dbl homology (DH) domain functions as guanine nucleotide exchange factor (GEF) that modulates the GTPases CDC42, RHOA and RAC1. Promotes the conversion of CDC42, RHOA and RAC1 from the GDP-bound to the GTP-bound form. This is Active breakpoint cluster region-related protein (abr) from Xenopus laevis (African clawed frog).